A 150-amino-acid polypeptide reads, in one-letter code: Arginine repressor (150 aa).

This sequence belongs to the ArgR family.

The protein localises to the cytoplasm. Its pathway is amino-acid biosynthesis; L-arginine biosynthesis [regulation]. Its function is as follows. Regulates arginine biosynthesis genes. The protein is Arginine repressor of Clostridium kluyveri (strain NBRC 12016).